A 231-amino-acid chain; its full sequence is Sensory transduction protein BceR (231 aa).

A Response regulatory domain is found at 3–116; sequence KIMLIEDDHT…VLVAKIQAIL (114 aa). Asp52 bears the 4-aspartylphosphate mark. A DNA-binding region (ompR/PhoB-type) is located at residues 127-225; that stretch reads TQLKTWCGAT…KVGQGYMAKE (99 aa).

In terms of processing, phosphorylated by BceS.

It is found in the cytoplasm. Its function is as follows. Member of the two-component regulatory system BceS/BceR involved in the regulation of bacitracin resistance. When activated by BceS, binds to the upstream region of the bceAB promoter and up-regulates the expression of these two genes. The polypeptide is Sensory transduction protein BceR (bceR) (Halalkalibacterium halodurans (strain ATCC BAA-125 / DSM 18197 / FERM 7344 / JCM 9153 / C-125) (Bacillus halodurans)).